The following is a 198-amino-acid chain: Probable GTP-binding protein EngB (198 aa).

Residues 27–198 (DLPEVALAGR…ESWDTILSEL (172 aa)) enclose the EngB-type G domain. Residues 35 to 42 (GRSNVGKS), 62 to 66 (GKTQL), 80 to 83 (DVPG), 147 to 150 (TKAD), and 179 to 181 (FSS) each bind GTP. Mg(2+)-binding residues include Ser-42 and Thr-64.

It belongs to the TRAFAC class TrmE-Era-EngA-EngB-Septin-like GTPase superfamily. EngB GTPase family. Mg(2+) serves as cofactor.

In terms of biological role, necessary for normal cell division and for the maintenance of normal septation. The chain is Probable GTP-binding protein EngB from Streptococcus agalactiae serotype III (strain NEM316).